The sequence spans 273 residues: Undecaprenyl-diphosphatase (273 aa).

The next 6 helical transmembrane spans lie at 46 to 63, 83 to 103, 109 to 129, 184 to 204, 218 to 238, and 249 to 269; these read LFEV…CWEY, FVLN…LAGK, LFNS…ILWV, ATEF…AYDL, AFGI…RGLL, and FAWY…YGLV.

The protein belongs to the UppP family.

The protein resides in the cell inner membrane. It carries out the reaction di-trans,octa-cis-undecaprenyl diphosphate + H2O = di-trans,octa-cis-undecaprenyl phosphate + phosphate + H(+). Catalyzes the dephosphorylation of undecaprenyl diphosphate (UPP). Confers resistance to bacitracin. This Methylococcus capsulatus (strain ATCC 33009 / NCIMB 11132 / Bath) protein is Undecaprenyl-diphosphatase.